The primary structure comprises 174 residues: uncharacterized protein (174 aa).

In terms of domain architecture, N-acetyltransferase spans 42-174; that stretch reads SSNKNINLYE…GVKGMFWYPR (133 aa).

It belongs to the acetyltransferase family. Ycf52 subfamily.

The protein resides in the plastid. It is found in the chloroplast. This is an uncharacterized protein from Pyropia yezoensis (Susabi-nori).